Reading from the N-terminus, the 1545-residue chain is ATP-binding cassette sub-family C member 2 (1545 aa).

At 1–27 the chain is on the extracellular side; that stretch reads MLEKFCNSTFWNSSFLDSPEADLPLCF. N-linked (GlcNAc...) asparagine glycosylation is found at Asn7 and Asn12. Residues 28–48 traverse the membrane as a helical segment; that stretch reads EQTVLVWIPLGYLWLLAPWQL. At 49 to 68 the chain is on the cytoplasmic side; sequence LHVYKSRTKRSSTTKLYLAK. The chain crosses the membrane as a helical span at residues 69–89; the sequence is QVFVGFLLILAAIELALVLTE. Residues 90–93 are Extracellular-facing; it reads DSGQ. Residues 94 to 114 traverse the membrane as a helical segment; the sequence is ATVPAVRYTNPSLYLGTWLLV. The Cytoplasmic portion of the chain corresponds to 115–126; it reads LLIQYSRQWCVQ. The helical transmembrane segment at 127–147 threads the bilayer; sequence KNSWFLSLFWILSILCGTFQF. At 148 to 165 the chain is on the extracellular side; that stretch reads QTLIRTLLQGDNSNLAYS. The chain crosses the membrane as a helical span at residues 166–186; it reads CLFFISYGFQILILIFSAFSE. Residues 187 to 313 are Cytoplasmic-facing; that stretch reads NNESSNNPSS…DVPKSWLMKA (127 aa). The interval 253–284 is disordered; the sequence is ARRALQRRQEKSSQQNSGARLPGLNKNQSQSQ. A phosphoserine mark is found at Ser281 and Ser283. A helical membrane pass occupies residues 314–334; sequence LFKTFYMVLLKSFLLKLVNDI. The ABC transmembrane type-1 1 domain maps to 322 to 605; the sequence is LLKSFLLKLV…LPMMISSMLQ (284 aa). Over 335–360 the chain is Extracellular; the sequence is FTFVSPQLLKLLISFASDRDTYLWIG. Residues 361-381 traverse the membrane as a helical segment; it reads YLCAILLFTAALIQSFCLQCY. Topologically, residues 382 to 437 are cytoplasmic; it reads FQLCFKLGVKVRTAIMASVYKKALTLSNLARKEYTVGETVNLMSVDAQKLMDVTNF. The helical transmembrane segment at 438-458 threads the bilayer; that stretch reads MHMLWSSVLQIVLSIFFLWRE. At 459–461 the chain is on the extracellular side; sequence LGP. A helical membrane pass occupies residues 462–482; the sequence is SVLAGVGVMVLVIPINAILST. Over 483-544 the chain is Cytoplasmic; that stretch reads KSKTIQVKNM…NLLAFSQLQC (62 aa). The chain crosses the membrane as a helical span at residues 545–565; that stretch reads VVIFVFQLTPVLVSVVTFSVY. The Extracellular portion of the chain corresponds to 566–587; that stretch reads VLVDSNNILDAQKAFTSITLFN. A helical membrane pass occupies residues 588 to 608; the sequence is ILRFPLSMLPMMISSMLQASV. Over 609 to 971 the chain is Cytoplasmic; the sequence is STERLEKYLG…VKFSIYLEYL (363 aa). The 225-residue stretch at 637 to 861 folds into the ABC transporter 1 domain; it reads MQFSEASFTW…KGEFAKNLKT (225 aa). ATP is bound at residue 671-678; the sequence is GPVGSGKS. Ser878, Ser926, Ser930, and Ser938 each carry phosphoserine. A helical transmembrane segment spans residues 972–992; sequence QAIGLFSIFFIILAFVMNSVA. The 286-residue stretch at 979–1264 folds into the ABC transmembrane type-1 2 domain; that stretch reads IFFIILAFVM…LVRMTSEIET (286 aa). Residues 993-1033 are Extracellular-facing; the sequence is FIGSNLWLSAWTSDSKIFNSTDYPASQRDMRVGVYGALGLA. N-linked (GlcNAc...) asparagine glycosylation is present at Asn1011. The helical transmembrane segment at 1034 to 1054 threads the bilayer; that stretch reads QGIFVFIAHFWSAFGFVHASN. Topologically, residues 1055 to 1097 are cytoplasmic; the sequence is ILHKQLLNNILRAPMRFFDTTPTGRIVNRFAGDISTVDDTLPQ. A helical membrane pass occupies residues 1098-1118; the sequence is SLRSWITCFLGIISTLVMICM. Position 1119 (Ala1119) is a topological domain, extracellular. The helical transmembrane segment at 1120–1140 threads the bilayer; that stretch reads TPVFTIIVIPLGIIYVSVQMF. Topologically, residues 1141–1211 are cytoplasmic; it reads YVSTSRQLRR…TSNRWLAIRL (71 aa). The helical transmembrane segment at 1212 to 1232 threads the bilayer; it reads ELVGNLTVFFSALMMVIYRDT. Topologically, residues 1233–1234 are extracellular; it reads LS. A helical membrane pass occupies residues 1235–1255; it reads GDTVGFVLSNALNITQTLNWL. At 1256–1545 the chain is on the cytoplasmic side; sequence VRMTSEIETN…GIENVNSTKF (290 aa). One can recognise an ABC transporter 2 domain in the interval 1300–1534; that stretch reads IQFNNYQVRY…PGPFYFMAKE (235 aa). 1334–1341 provides a ligand contact to ATP; it reads GRTGAGKS. The residue at position 1438 (Ser1438) is a Phosphoserine.

Belongs to the ABC transporter superfamily. ABCC family. Conjugate transporter (TC 3.A.1.208) subfamily. As to expression, expressed by polarized cells in liver, kidney and intestine. The highest expression is found in liver. Expressed in small intestine.

The protein resides in the apical cell membrane. The catalysed reaction is ATP + H2O + xenobioticSide 1 = ADP + phosphate + xenobioticSide 2.. The enzyme catalyses an S-substituted glutathione(in) + ATP + H2O = an S-substituted glutathione(out) + ADP + phosphate + H(+). It carries out the reaction taurolithocholate 3-sulfate(in) + ATP + H2O = taurolithocholate 3-sulfate(out) + ADP + phosphate + H(+). It catalyses the reaction leukotriene C4(in) + ATP + H2O = leukotriene C4(out) + ADP + phosphate + H(+). The catalysed reaction is 17beta-estradiol 17-O-(beta-D-glucuronate)(in) + ATP + H2O = 17beta-estradiol 17-O-(beta-D-glucuronate)(out) + ADP + phosphate + H(+). The enzyme catalyses (4Z,15Z)-bilirubin IXalpha C8-beta-D-glucuronoside(in) + ATP + H2O = (4Z,15Z)-bilirubin IXalpha C8-beta-D-glucuronoside(out) + ADP + phosphate + H(+). It carries out the reaction (4Z,15Z)-bilirubin IXalpha C8,C12-beta-D-bisglucuronoside(in) + ATP + H2O = (4Z,15Z)-bilirubin IXalpha C8,C12-beta-D-bisglucuronoside(out) + ADP + phosphate + H(+). Functionally, ATP-dependent transporter of the ATP-binding cassette (ABC) family that binds and hydrolyzes ATP to enable active transport of various substrates including many drugs, toxicants and endogenous compound across cell membranes. Transports a wide variety of conjugated organic anions such as sulfate-, glucuronide- and glutathione (GSH)-conjugates of endo- and xenobiotics substrates. Mediates hepatobiliary excretion of mono- and bis-glucuronidated bilirubin molecules and therefore play an important role in bilirubin detoxification. Also mediates hepatobiliary excretion of others glucuronide conjugates such as 17beta-estradiol 17-glucosiduronic acid and leukotriene C4. Transports sulfated bile salt such as taurolithocholate sulfate. Transports various anticancer drugs, such as anthracycline, vinca alkaloid and methotrexate and HIV-drugs such as protease inhibitors. Confers resistance to several anti-cancer drugs including cisplatin, doxorubicin, epirubicin, methotrexate, etoposide and vincristine. The protein is ATP-binding cassette sub-family C member 2 of Homo sapiens (Human).